Reading from the N-terminus, the 486-residue chain is Ribulose bisphosphate carboxylase large chain (486 aa).

Residues Asn-125 and Thr-175 each coordinate substrate. Lys-177 (proton acceptor) is an active-site residue. Substrate is bound at residue Lys-179. Residues Lys-203, Asp-205, and Glu-206 each coordinate Mg(2+). Position 203 is an N6-carboxylysine (Lys-203). His-295 (proton acceptor) is an active-site residue. Positions 296, 328, and 380 each coordinate substrate.

The protein belongs to the RuBisCO large chain family. Type I subfamily. As to quaternary structure, heterohexadecamer of 8 large chains and 8 small chains. The cofactor is Mg(2+).

It carries out the reaction 2 (2R)-3-phosphoglycerate + 2 H(+) = D-ribulose 1,5-bisphosphate + CO2 + H2O. The enzyme catalyses D-ribulose 1,5-bisphosphate + O2 = 2-phosphoglycolate + (2R)-3-phosphoglycerate + 2 H(+). Its function is as follows. RuBisCO catalyzes two reactions: the carboxylation of D-ribulose 1,5-bisphosphate, the primary event in carbon dioxide fixation, as well as the oxidative fragmentation of the pentose substrate. Both reactions occur simultaneously and in competition at the same active site. The polypeptide is Ribulose bisphosphate carboxylase large chain (Bradyrhizobium diazoefficiens (strain JCM 10833 / BCRC 13528 / IAM 13628 / NBRC 14792 / USDA 110)).